The sequence spans 272 residues: Regulatory protein RecX (272 aa).

The protein belongs to the RecX family.

It is found in the cytoplasm. Its function is as follows. Modulates RecA activity. The polypeptide is Regulatory protein RecX (Oceanobacillus iheyensis (strain DSM 14371 / CIP 107618 / JCM 11309 / KCTC 3954 / HTE831)).